Here is a 399-residue protein sequence, read N- to C-terminus: F420-dependent formate dehydrogenase subunit beta (399 aa).

4Fe-4S ferredoxin-type domains follow at residues Thr287 to Pro307 and Glu339 to Ile367. [4Fe-4S] cluster is bound by residues Cys296, Cys299, Cys302, Cys306, Cys348, Cys351, Cys354, and Cys358.

The protein belongs to the FrhB family. As to quaternary structure, dimer of an alpha (FdhA) and a beta (FdhB) subunit. [4Fe-4S] cluster is required as a cofactor. It depends on FAD as a cofactor. The cofactor is Zn(2+).

The enzyme catalyses oxidized coenzyme F420-(gamma-L-Glu)(n) + formate + 2 H(+) = reduced coenzyme F420-(gamma-L-Glu)(n) + CO2. Its activity is regulated as follows. Is extremely sensitive to oxygen. Contains a FAD that is required for coenzyme F420-dependent activity but not for methyl viologen-dependent activity. Preincubation of the FAD-depleted enzyme with FAD restores coenzyme F420-dependent activity. Neither FMN nor FADH2 can replace FAD. Strongly inhibited by cyanide, azide, alpha,alpha-dipyridyl and 1,10-phenanthroline. Catalyzes the oxidation of formate to carbon dioxide, with coenzyme F420 as the electron acceptor. In vitro can also use methyl viologen, 7,8-didemethyl-8-hydroxy-5-deazariboflavin (or FO, a hydrolytic derivative of coenzyme F420), FMN and FAD as electron acceptors, but not NAD(+) or NADP(+). This Methanobacterium formicicum protein is F420-dependent formate dehydrogenase subunit beta.